The chain runs to 801 residues: K(+)-insensitive pyrophosphate-energized proton pump (801 aa).

5 consecutive transmembrane segments (helical) span residues 27–47 (VIVMVIGVVALAALVVAGILV), 81–101 (TLGVFAVVVFFLLMLLPADDW), 109–129 (VFFLIGALFSATTGYTGMWLA), 170–190 (GVVGMFTVGLGLLGASCVVLV), and 201–221 (GFGLGAALIAMFMRVGGGIFT). Residue Lys-222 coordinates substrate. Asp-225, Asp-229, Asn-252, and Asp-255 together coordinate Mg(2+). 7 consecutive transmembrane segments (helical) span residues 261–281 (AGMAADLFESYAVTLVAALIL), 292–312 (AFPLIVPAIGVLTAMIGIFAV), 328–348 (GFFVSAVFSLALVAVAVYVYL), 372–392 (ILAMVAVAIGIVLAALIQQLT), 406–426 (IGKSSLTGAATVVLAGISVGL), 429–449 (AVYTALLIGLGVYGAFLLGGT), and 453–473 (LALFAVALAGTGLLTTVGVIV). Asp-483 serves as a coordination point for Mg(2+). 4 helical membrane-spanning segments follow: residues 515–535 (AITKGIAIATAVLAASALFGS), 571–591 (VGLIAGAAVVFLFSGLAINAV), 641–661 (LLAVLAPIAIGFTLGVGALGA), and 663–683 (LAGAIGTGTLMAVFLANSGGA). The Ca(2+) site is built by Asp-685, Asp-711, and Asp-715. Lys-718 contacts substrate. 2 consecutive transmembrane segments (helical) span residues 724–744 (AINPLLKVMNLVALLIAPAVV) and 754–774 (LGVRIAIAVLSILVIVGAVYI).

Belongs to the H(+)-translocating pyrophosphatase (TC 3.A.10) family. K(+)-insensitive subfamily. In terms of assembly, homodimer. Mg(2+) is required as a cofactor.

It is found in the cell membrane. The enzyme catalyses diphosphate + H2O + H(+)(in) = 2 phosphate + 2 H(+)(out). Functionally, proton pump that utilizes the energy of pyrophosphate hydrolysis as the driving force for proton movement across the membrane. Generates a proton motive force. The protein is K(+)-insensitive pyrophosphate-energized proton pump of Streptomyces avermitilis (strain ATCC 31267 / DSM 46492 / JCM 5070 / NBRC 14893 / NCIMB 12804 / NRRL 8165 / MA-4680).